We begin with the raw amino-acid sequence, 301 residues long: 33 kDa chaperonin (301 aa).

Intrachain disulfides connect C239/C241 and C272/C275.

Belongs to the HSP33 family. In terms of processing, under oxidizing conditions two disulfide bonds are formed involving the reactive cysteines. Under reducing conditions zinc is bound to the reactive cysteines and the protein is inactive.

The protein resides in the cytoplasm. Functionally, redox regulated molecular chaperone. Protects both thermally unfolding and oxidatively damaged proteins from irreversible aggregation. Plays an important role in the bacterial defense system toward oxidative stress. This chain is 33 kDa chaperonin, found in Trichormus variabilis (strain ATCC 29413 / PCC 7937) (Anabaena variabilis).